A 126-amino-acid polypeptide reads, in one-letter code: Large ribosomal subunit protein bL12 (126 aa).

The protein belongs to the bacterial ribosomal protein bL12 family. In terms of assembly, homodimer. Part of the ribosomal stalk of the 50S ribosomal subunit. Forms a multimeric L10(L12)X complex, where L10 forms an elongated spine to which 2 to 4 L12 dimers bind in a sequential fashion. Binds GTP-bound translation factors.

Functionally, forms part of the ribosomal stalk which helps the ribosome interact with GTP-bound translation factors. Is thus essential for accurate translation. The sequence is that of Large ribosomal subunit protein bL12 from Beijerinckia indica subsp. indica (strain ATCC 9039 / DSM 1715 / NCIMB 8712).